A 515-amino-acid chain; its full sequence is Bifunctional purine biosynthesis protein PurH (515 aa).

The region spanning 1–145 is the MGS-like domain; sequence MTKRALISVS…KNHASVTVVV (145 aa).

It belongs to the PurH family.

It carries out the reaction (6R)-10-formyltetrahydrofolate + 5-amino-1-(5-phospho-beta-D-ribosyl)imidazole-4-carboxamide = 5-formamido-1-(5-phospho-D-ribosyl)imidazole-4-carboxamide + (6S)-5,6,7,8-tetrahydrofolate. It catalyses the reaction IMP + H2O = 5-formamido-1-(5-phospho-D-ribosyl)imidazole-4-carboxamide. Its pathway is purine metabolism; IMP biosynthesis via de novo pathway; 5-formamido-1-(5-phospho-D-ribosyl)imidazole-4-carboxamide from 5-amino-1-(5-phospho-D-ribosyl)imidazole-4-carboxamide (10-formyl THF route): step 1/1. It participates in purine metabolism; IMP biosynthesis via de novo pathway; IMP from 5-formamido-1-(5-phospho-D-ribosyl)imidazole-4-carboxamide: step 1/1. In Streptococcus thermophilus (strain ATCC BAA-491 / LMD-9), this protein is Bifunctional purine biosynthesis protein PurH.